The chain runs to 183 residues: ARS-binding factor 2, mitochondrial (183 aa).

The transit peptide at 1–26 (MNSYSLLTRSFHESSKPLFNLASTLL) directs the protein to the mitochondrion. 2 DNA-binding regions (HMG box) span residues 43–111 (PKRP…KEFD) and 116–183 (PKKP…YPLN).

It is found in the mitochondrion. The protein localises to the nucleus. Specific binding to the autonomously replicating sequence 1 (ARS1). Interaction with regulatory regions: probably involved in compacting the mitochondrial genome. It might play a positive role in gene expression and replication. This is ARS-binding factor 2, mitochondrial (ABF2) from Saccharomyces cerevisiae (strain ATCC 204508 / S288c) (Baker's yeast).